The chain runs to 234 residues: tRNA (guanine-N(1)-)-methyltransferase (234 aa).

S-adenosyl-L-methionine is bound by residues glycine 110 and 134–139; that span reads IGDYVL.

This sequence belongs to the RNA methyltransferase TrmD family. In terms of assembly, homodimer.

The protein resides in the cytoplasm. The enzyme catalyses guanosine(37) in tRNA + S-adenosyl-L-methionine = N(1)-methylguanosine(37) in tRNA + S-adenosyl-L-homocysteine + H(+). Its function is as follows. Specifically methylates guanosine-37 in various tRNAs. The protein is tRNA (guanine-N(1)-)-methyltransferase of Tropheryma whipplei (strain TW08/27) (Whipple's bacillus).